The following is a 284-amino-acid chain: Tropomyosin, smooth muscle/fibroblast CTM1 (284 aa).

Residues 1 to 284 (MEAIKKKMTM…DVTLQGIGDL (284 aa)) are a coiled coil. The segment at 18-38 (AIDRAEQAETDKKSAEDKATG) is disordered.

Belongs to the tropomyosin family. Homodimer. As to expression, predominantly expressed in body wall muscle and heart, low in intestine, ovary and larval tail muscle.

Functionally, the function of tropomyosin in smooth muscle and non-muscle cells is not clear. In Ciona intestinalis (Transparent sea squirt), this protein is Tropomyosin, smooth muscle/fibroblast CTM1 (CTM1).